Reading from the N-terminus, the 231-residue chain is uncharacterized protein (231 aa).

The first 19 residues, 1–19 (MKFKFLLTPLLSSVLFLSA), serve as a signal peptide directing secretion. Cys-20 carries N-palmitoyl cysteine lipidation. A lipid anchor (S-diacylglycerol cysteine) is attached at Cys-20.

The protein belongs to the MG439/MG440 family.

The protein localises to the cell membrane. This is an uncharacterized protein from Mycoplasma pneumoniae (strain ATCC 29342 / M129 / Subtype 1) (Mycoplasmoides pneumoniae).